The primary structure comprises 67 residues: Toxin Bl-1 (67 aa).

An LCN-type CS-alpha/beta domain is found at 2-66 (RDGYISQPEN…GIIVDGIKCH (65 aa)). 4 cysteine pairs are disulfide-bonded: C12–C65, C16–C37, C23–C47, and C27–C49. The residue at position 67 (T67) is a Threonine amide.

The protein belongs to the long (4 C-C) scorpion toxin superfamily. Sodium channel inhibitor family. Alpha subfamily. As to expression, expressed by the venom gland.

Its subcellular location is the secreted. Its function is as follows. Alpha toxins bind voltage-independently at site-3 of sodium channels (Nav) and inhibit the inactivation of the activated channels, thereby blocking neuronal transmission. Is highly toxic to insects (tested on the crickets A.domesticus). This peptide may also be toxic to mammals, since it is similar to alpha-like toxins that are active on both insect and mammalian sodium channels. The chain is Toxin Bl-1 from Buthacus leptochelys (Egyptian fat-tailed scorpion).